The chain runs to 395 residues: Sensor protein DltS (395 aa).

Transmembrane regions (helical) follow at residues 9-29 (FVFL…AVSN) and 136-156 (FLIL…SLYL). Residues 177 to 387 (DASHELKTPI…RLEVQLPIDG (211 aa)) enclose the Histidine kinase domain. His180 bears the Phosphohistidine; by autocatalysis mark.

It is found in the cell membrane. The enzyme catalyses ATP + protein L-histidine = ADP + protein N-phospho-L-histidine.. Its function is as follows. Member of the two-component regulatory system DltS/DltR. Regulates the expression of the dlt operon. Probably phosphorylates DltR. This is Sensor protein DltS (dltS) from Streptococcus agalactiae serotype III (strain NEM316).